The sequence spans 500 residues: L-arabinose isomerase (500 aa).

Residues E306, E333, H350, and H450 each contribute to the Mn(2+) site.

The protein belongs to the arabinose isomerase family. As to quaternary structure, homohexamer. It depends on Mn(2+) as a cofactor.

The enzyme catalyses beta-L-arabinopyranose = L-ribulose. Its pathway is carbohydrate degradation; L-arabinose degradation via L-ribulose; D-xylulose 5-phosphate from L-arabinose (bacterial route): step 1/3. Functionally, catalyzes the conversion of L-arabinose to L-ribulose. This chain is L-arabinose isomerase, found in Shigella dysenteriae serotype 1 (strain Sd197).